A 1241-amino-acid polypeptide reads, in one-letter code: Dinoflagellate luciferase (1241 aa).

3 luciferase regions span residues 114–465, 491–842, and 868–1218; these read KTGL…IKRD, DQGF…TKRD, and EKGF…KKRD.

This sequence belongs to the calycin superfamily. Luciferase family.

It localises to the cytoplasmic vesicle. The catalysed reaction is dinoflagellate luciferin + O2 = oxidized dinoflagellate luciferin + hnu + H2O + H(+). Regulated by pH: upon acidification, at a pH of 6.3, dinoflagellate luciferin is released from luciferin-binding protein LBP, allowing the interaction between Dinoflagellate luciferase and its substrate luciferin. Its function is as follows. Emits blue light flashes with a wavelength of 475 nm during the night phase. In Lingulodinium polyedra (Dinoflagellate), this protein is Dinoflagellate luciferase.